The chain runs to 690 residues: MPRVHAIEDYRNFGIMAHIDAGKTTTTERILYYTGKSHRIGEVHEGAATMDWMEQEQERGITITSAATTAFWNGKRLNIIDTPGHVDFTIEVERSLRVLDGAVCVLDSNQGVEPQTETVWRQGDKYKVPRIVFANKMDKTGADFFKCLQDIIDRLGAKPVAIQLPIGSESNFKGLIDLVRMKAVVWTDESLGAKFEDAEIPEDLLEQAKEYREKMIEAAVELDDDAMAAYLDGNEPEEATLKRLIRKAVLTGAFYPVLCGSAFKNKGVQPLLDAVVDYLPSPVDVPAIKGIDDDGNEVVRQADDKEPLALLAFKIMDDPFVGTITFCRIYSGVLQSGTGVVNSTREKKERIGRMLLMHANNREDIKEAYAGDIVALAGLKEARTGDTLCDPAKPVILEKMEFPEPVIEIAIEPKSKADQEKLGVALAKLAAEDPSFRVSTDIESGQTILKGMGELHLDIKVDILRRTYKVDANIGAPQVAFRERITKRAEVDYTHKKQTGGTGQFAAVKFIVEPNEPGKGYEFESKIVGGAVPKEYIPGVEKGIESVLSSGVVAGFPVVDVKVSLIDGKYHDVDSSALAFEIASRAAFREALQKGKSVLLEPIMKVEVVTPEDYTGSVIGDLNSRRGQIQGQDMRGNANVINAMVPLMNMFGYVNNLRSMSQGRATFTMQFDHYAEAPANVSAEVQKKFA.

The tr-type G domain occupies 8–283 (EDYRNFGIMA…AVVDYLPSPV (276 aa)). Residues 17–24 (AHIDAGKT), 81–85 (DTPGH), and 135–138 (NKMD) each bind GTP.

The protein belongs to the TRAFAC class translation factor GTPase superfamily. Classic translation factor GTPase family. EF-G/EF-2 subfamily.

The protein resides in the cytoplasm. Catalyzes the GTP-dependent ribosomal translocation step during translation elongation. During this step, the ribosome changes from the pre-translocational (PRE) to the post-translocational (POST) state as the newly formed A-site-bound peptidyl-tRNA and P-site-bound deacylated tRNA move to the P and E sites, respectively. Catalyzes the coordinated movement of the two tRNA molecules, the mRNA and conformational changes in the ribosome. In Rhodopseudomonas palustris (strain BisB5), this protein is Elongation factor G.